The chain runs to 263 residues: Auxin-responsive protein IAA3 (263 aa).

2 disordered regions span residues Met1 to Ala54 and Arg76 to Lys121. Over residues Arg28–Glu38 the composition is skewed to basic and acidic residues. An EAR-like (transcriptional repression) motif is present at residues Leu39–Leu43. One can recognise a PB1 domain in the interval Phe158–Gly245.

It belongs to the Aux/IAA family. Homodimers and heterodimers. In terms of tissue distribution, highly expressed in flowers. Expressed in roots and shoots.

The protein localises to the nucleus. Functionally, aux/IAA proteins are short-lived transcriptional factors that function as repressors of early auxin response genes at low auxin concentrations. In Oryza sativa subsp. japonica (Rice), this protein is Auxin-responsive protein IAA3 (IAA3).